The chain runs to 682 residues: Guanylate cyclase soluble subunit beta-2 (682 aa).

His43 serves as a coordination point for heme. The Guanylate cyclase domain occupies 408–536 (TILFSDVVTF…DTVNTASRME (129 aa)). The segment at 592 to 667 (MGRPSAPADG…QPSPDETKTS (76 aa)) is disordered. Residues 649–667 (RNSTDAVNNQPSPDETKTS) show a composition bias toward polar residues.

Belongs to the adenylyl cyclase class-4/guanylyl cyclase family. In terms of assembly, heterodimer of an alpha and a beta chain. Requires heme as cofactor. In terms of tissue distribution, kidney and liver.

The protein localises to the cytoplasm. It catalyses the reaction GTP = 3',5'-cyclic GMP + diphosphate. Activated by nitric oxide in the presence of magnesium or manganese ions. The sequence is that of Guanylate cyclase soluble subunit beta-2 (Gucy1b2) from Rattus norvegicus (Rat).